A 396-amino-acid chain; its full sequence is L-lactate dehydrogenase (396 aa).

Residues 1–380 (MIISAASDYR…TQDSLVQELS (380 aa)) form the FMN hydroxy acid dehydrogenase domain. Tyr-24 contacts substrate. FMN-binding residues include Ser-106 and Gln-127. Tyr-129 is a substrate binding site. Thr-155 is a binding site for FMN. A substrate-binding site is contributed by Arg-164. FMN is bound at residue Lys-251. The active-site Proton acceptor is the His-275. Arg-278 lines the substrate pocket. 306 to 330 (DSGIRNGLDVVRMIALGADTVLLGR) is an FMN binding site.

This sequence belongs to the FMN-dependent alpha-hydroxy acid dehydrogenase family. The cofactor is FMN.

The protein localises to the cell inner membrane. It carries out the reaction (S)-lactate + A = pyruvate + AH2. Catalyzes the conversion of L-lactate to pyruvate. Is coupled to the respiratory chain. The polypeptide is L-lactate dehydrogenase (Escherichia coli (strain SMS-3-5 / SECEC)).